The sequence spans 452 residues: tRNA modification GTPase MnmE (452 aa).

Positions 28, 85, and 124 each coordinate (6S)-5-formyl-5,6,7,8-tetrahydrofolate. The 159-residue stretch at Gly-220–Gly-378 folds into the TrmE-type G domain. Residue Asn-230 coordinates K(+). GTP is bound by residues Asn-230–Ser-235, Thr-249–Thr-255, Asp-274–Gly-277, and Ser-359–Arg-361. Ser-234 is a Mg(2+) binding site. The K(+) site is built by Thr-249, Val-251, and Thr-254. A Mg(2+)-binding site is contributed by Thr-255. Lys-452 is a (6S)-5-formyl-5,6,7,8-tetrahydrofolate binding site.

It belongs to the TRAFAC class TrmE-Era-EngA-EngB-Septin-like GTPase superfamily. TrmE GTPase family. In terms of assembly, homodimer. Heterotetramer of two MnmE and two MnmG subunits. The cofactor is K(+).

The protein resides in the cytoplasm. In terms of biological role, exhibits a very high intrinsic GTPase hydrolysis rate. Involved in the addition of a carboxymethylaminomethyl (cmnm) group at the wobble position (U34) of certain tRNAs, forming tRNA-cmnm(5)s(2)U34. The protein is tRNA modification GTPase MnmE of Azoarcus sp. (strain BH72).